We begin with the raw amino-acid sequence, 361 residues long: uncharacterized protein (361 aa).

33-40 (GPINSGKT) contributes to the ATP binding site.

The protein belongs to the archaeal ATPase family.

This is an uncharacterized protein from Methanocaldococcus jannaschii (strain ATCC 43067 / DSM 2661 / JAL-1 / JCM 10045 / NBRC 100440) (Methanococcus jannaschii).